Here is a 238-residue protein sequence, read N- to C-terminus: ATP synthase subunit a (238 aa).

5 consecutive transmembrane segments (helical) span residues 18–38, 76–96, 117–137, 173–193, and 208–230; these read GTTMITTTIAMAIVVIITVIG, FIVLAYALLFYVFVANMMGIP, VLTLTMAVFIVVLTHIYGIMV, LFGNIYAKEILMLLLVSLGTT, and WQAFSIFIGSLQAYIFAMLAMVY.

This sequence belongs to the ATPase A chain family. In terms of assembly, F-type ATPases have 2 components, CF(1) - the catalytic core - and CF(0) - the membrane proton channel. CF(1) has five subunits: alpha(3), beta(3), gamma(1), delta(1), epsilon(1). CF(0) has three main subunits: a(1), b(2) and c(9-12). The alpha and beta chains form an alternating ring which encloses part of the gamma chain. CF(1) is attached to CF(0) by a central stalk formed by the gamma and epsilon chains, while a peripheral stalk is formed by the delta and b chains.

The protein resides in the cell membrane. Key component of the proton channel; it plays a direct role in the translocation of protons across the membrane. The chain is ATP synthase subunit a from Shouchella clausii (strain KSM-K16) (Alkalihalobacillus clausii).